We begin with the raw amino-acid sequence, 146 residues long: Large ribosomal subunit protein uL15 (146 aa).

A disordered region spans residues 1–52 (MKLSNLSPKAGSKKRRRRVGRGIAAGQGASCGFGMRGQKSRSGTGTKAGFEG). The span at 11–20 (GSKKRRRRVG) shows a compositional bias: basic residues. A compositionally biased stretch (gly residues) spans 23-35 (IAAGQGASCGFGM).

This sequence belongs to the universal ribosomal protein uL15 family. In terms of assembly, part of the 50S ribosomal subunit.

Binds to the 23S rRNA. The polypeptide is Large ribosomal subunit protein uL15 (Picosynechococcus sp. (strain ATCC 27264 / PCC 7002 / PR-6) (Agmenellum quadruplicatum)).